The chain runs to 346 residues: Methionine import ATP-binding protein MetN 1 (346 aa).

Positions 2–241 constitute an ABC transporter domain; that stretch reads IEFKQVTKTF…PQHPTTEKFV (240 aa). Residue 38–45 coordinates ATP; the sequence is GFSGAGKS.

The protein belongs to the ABC transporter superfamily. Methionine importer (TC 3.A.1.24) family. As to quaternary structure, the complex is composed of two ATP-binding proteins (MetN), two transmembrane proteins (MetI) and a solute-binding protein (MetQ).

The protein localises to the cell membrane. The enzyme catalyses L-methionine(out) + ATP + H2O = L-methionine(in) + ADP + phosphate + H(+). The catalysed reaction is D-methionine(out) + ATP + H2O = D-methionine(in) + ADP + phosphate + H(+). Functionally, part of the ABC transporter complex MetNIQ involved in methionine import. Responsible for energy coupling to the transport system. This is Methionine import ATP-binding protein MetN 1 from Shouchella clausii (strain KSM-K16) (Alkalihalobacillus clausii).